A 245-amino-acid chain; its full sequence is Adenosylcobinamide-GDP ribazoletransferase (245 aa).

Transmembrane regions (helical) follow at residues 31 to 51, 57 to 77, 109 to 129, 134 to 154, and 176 to 196; these read LLHY…AALL, PLLQ…ALHL, VAVV…LVVL, PAAL…LFLC, and ALMV…TGLL.

The protein belongs to the CobS family. Requires Mg(2+) as cofactor.

It is found in the cell inner membrane. It carries out the reaction alpha-ribazole + adenosylcob(III)inamide-GDP = adenosylcob(III)alamin + GMP + H(+). It catalyses the reaction alpha-ribazole 5'-phosphate + adenosylcob(III)inamide-GDP = adenosylcob(III)alamin 5'-phosphate + GMP + H(+). The protein operates within cofactor biosynthesis; adenosylcobalamin biosynthesis; adenosylcobalamin from cob(II)yrinate a,c-diamide: step 7/7. Joins adenosylcobinamide-GDP and alpha-ribazole to generate adenosylcobalamin (Ado-cobalamin). Also synthesizes adenosylcobalamin 5'-phosphate from adenosylcobinamide-GDP and alpha-ribazole 5'-phosphate. This is Adenosylcobinamide-GDP ribazoletransferase from Stutzerimonas stutzeri (strain A1501) (Pseudomonas stutzeri).